Reading from the N-terminus, the 290-residue chain is Protoheme IX farnesyltransferase (290 aa).

The next 9 membrane-spanning stretches (helical) occupy residues 8–28 (LTKPGIIMGNLISVLAGYFLA), 36–56 (LSLLVYTMLGVALVIASGCVV), 81–101 (INIEFAFLFAIIMLLIGTGLL), 108–128 (LSAVMVLLGYVFYVFFYTMWY), 133–153 (VYGTLVGSVSGAIPPLVGYLA), 163–183 (VLLFGLFCLWQMPHSYAIAMF), 209–229 (IMIYVLVFSVVALGLYAFGHT), 230–247 (GYEYLAVVAISCYGWFKV), and 270–290 (LAITAFSTVLGIELLPFSITF).

The protein belongs to the UbiA prenyltransferase family. Protoheme IX farnesyltransferase subfamily.

It is found in the cell inner membrane. It carries out the reaction heme b + (2E,6E)-farnesyl diphosphate + H2O = Fe(II)-heme o + diphosphate. The protein operates within porphyrin-containing compound metabolism; heme O biosynthesis; heme O from protoheme: step 1/1. In terms of biological role, converts heme B (protoheme IX) to heme O by substitution of the vinyl group on carbon 2 of heme B porphyrin ring with a hydroxyethyl farnesyl side group. The protein is Protoheme IX farnesyltransferase of Aliivibrio salmonicida (strain LFI1238) (Vibrio salmonicida (strain LFI1238)).